Reading from the N-terminus, the 318-residue chain is Aspartate carbamoyltransferase catalytic subunit (318 aa).

2 residues coordinate carbamoyl phosphate: arginine 67 and threonine 68. Position 95 (lysine 95) interacts with L-aspartate. Residues arginine 117, histidine 145, and glutamine 148 each coordinate carbamoyl phosphate. The L-aspartate site is built by arginine 178 and arginine 236. Glycine 277 and proline 278 together coordinate carbamoyl phosphate.

It belongs to the aspartate/ornithine carbamoyltransferase superfamily. ATCase family. Heterododecamer (2C3:3R2) of six catalytic PyrB chains organized as two trimers (C3), and six regulatory PyrI chains organized as three dimers (R2).

The enzyme catalyses carbamoyl phosphate + L-aspartate = N-carbamoyl-L-aspartate + phosphate + H(+). Its pathway is pyrimidine metabolism; UMP biosynthesis via de novo pathway; (S)-dihydroorotate from bicarbonate: step 2/3. Catalyzes the condensation of carbamoyl phosphate and aspartate to form carbamoyl aspartate and inorganic phosphate, the committed step in the de novo pyrimidine nucleotide biosynthesis pathway. The sequence is that of Aspartate carbamoyltransferase catalytic subunit from Roseiflexus castenholzii (strain DSM 13941 / HLO8).